The sequence spans 231 residues: 5'-methylthioadenosine/S-adenosylhomocysteine nucleosidase (231 aa).

Glu12 serves as the catalytic Proton acceptor. Residues Gly78, Val153, and 174–175 contribute to the substrate site; that span reads ME. The Proton donor role is filled by Asp198.

It belongs to the PNP/UDP phosphorylase family. MtnN subfamily.

The enzyme catalyses S-adenosyl-L-homocysteine + H2O = S-(5-deoxy-D-ribos-5-yl)-L-homocysteine + adenine. It catalyses the reaction S-methyl-5'-thioadenosine + H2O = 5-(methylsulfanyl)-D-ribose + adenine. It carries out the reaction 5'-deoxyadenosine + H2O = 5-deoxy-D-ribose + adenine. It functions in the pathway amino-acid biosynthesis; L-methionine biosynthesis via salvage pathway; S-methyl-5-thio-alpha-D-ribose 1-phosphate from S-methyl-5'-thioadenosine (hydrolase route): step 1/2. Functionally, catalyzes the irreversible cleavage of the glycosidic bond in both 5'-methylthioadenosine (MTA) and S-adenosylhomocysteine (SAH/AdoHcy) to adenine and the corresponding thioribose, 5'-methylthioribose and S-ribosylhomocysteine, respectively. Also cleaves 5'-deoxyadenosine, a toxic by-product of radical S-adenosylmethionine (SAM) enzymes, into 5-deoxyribose and adenine. The sequence is that of 5'-methylthioadenosine/S-adenosylhomocysteine nucleosidase from Vibrio vulnificus (strain YJ016).